The sequence spans 601 residues: Aspartate--tRNA(Asp/Asn) ligase (601 aa).

An L-aspartate-binding site is contributed by Glu177. The aspartate stretch occupies residues 201–204; it reads QLFK. Arg223 serves as a coordination point for L-aspartate. Residues 223–225 and Gln232 contribute to the ATP site; that span reads RDE. L-aspartate is bound at residue His455. Glu489 is an ATP binding site. Arg496 contacts L-aspartate. 541 to 544 is a binding site for ATP; the sequence is GWDR. Residues 568–601 are disordered; it reads VDPLTDAPAPIPLEQRRETGVDFKPKKKTDESAV. Positions 581 to 601 are enriched in basic and acidic residues; that stretch reads EQRRETGVDFKPKKKTDESAV.

The protein belongs to the class-II aminoacyl-tRNA synthetase family. Type 1 subfamily. Homodimer.

The protein resides in the cytoplasm. The enzyme catalyses tRNA(Asx) + L-aspartate + ATP = L-aspartyl-tRNA(Asx) + AMP + diphosphate. Functionally, aspartyl-tRNA synthetase with relaxed tRNA specificity since it is able to aspartylate not only its cognate tRNA(Asp) but also tRNA(Asn). Reaction proceeds in two steps: L-aspartate is first activated by ATP to form Asp-AMP and then transferred to the acceptor end of tRNA(Asp/Asn). The chain is Aspartate--tRNA(Asp/Asn) ligase from Corynebacterium diphtheriae (strain ATCC 700971 / NCTC 13129 / Biotype gravis).